The following is a 345-amino-acid chain: MEDERGREHGGDAAQQKTPRPECEESRPLSVEKKQRCRLDGKDTDGSKFITSNGGDFSDPVYKEIAMTNGCINRMSKEELRAKLSEFKLETRGVKDVLKKRLKNYYKKQKLMLKESNAVDSYYDYICIIDFEATCEEGNPAEFLHEIIEFPVVLLNTHSLEIEDTFQQYVRPEVNSQLSEFCIGLTGITQDQVDRADAFPQVLKKVIEWMKSKELGTKYKYCILTDGSWDMSKFLNIQCQLSRLKYPSFAKKWINIRKSYGNFYKVPRSQTKLTIMLEKLGMDYDGRPHSGLDDSKNIARIAVRMLQDGCELRINEKLHGGQLMSVSSSLPVEGAPAPQMPHSRK.

Composition is skewed to basic and acidic residues over residues 1 to 11 (MEDERGREHGG) and 19 to 40 (PRPECEESRPLSVEKKQRCRLD). Residues 1–40 (MEDERGREHGGDAAQQKTPRPECEESRPLSVEKKQRCRLD) form a disordered region. Ser58 bears the Phosphoserine mark. The region spanning 72–106 (INRMSKEELRAKLSEFKLETRGVKDVLKKRLKNYY) is the SAP domain. Residues 126–302 (ICIIDFEATC…DDSKNIARIA (177 aa)) form the Exonuclease domain. 2 residues coordinate Mg(2+): Asp130 and Glu132. Catalysis depends on Glu132, which acts as the Proton acceptor. Residues Glu132 and Ala133 each coordinate AMP. Residue Asp230 coordinates Mg(2+). His289 (proton acceptor) is an active-site residue. Residue His289 coordinates AMP. Asp294 contributes to the Mg(2+) binding site.

In terms of assembly, identified in a histone pre-mRNA complex, at least composed of ERI1, LSM11, SLBP, SNRPB, SYNCRIP and YBX1. Binds to 40S and 60S ribosomal subunits and to 80S assembled ribosomes. Interacts in a cooperative manner with SLBP to the mature 3'-end of histone mRNAs. Found in a ternary complex with SLBP and the stem-loop structure of the 3'-end of histone mRNAs. Mg(2+) serves as cofactor.

The protein localises to the cytoplasm. It localises to the nucleus. It is found in the nucleolus. The catalysed reaction is Exonucleolytic cleavage in the 3'- to 5'-direction to yield nucleoside 5'-phosphates.. Although it can bind simultaneously with SLBP to the 3'-end of histone mRNA, the presence of SLBP prevents the exonuclease activity. RNA exonuclease that binds to the 3'-end of histone mRNAs and degrades them, suggesting that it plays an essential role in histone mRNA decay after replication. A 2' and 3'-hydroxyl groups at the last nucleotide of the histone 3'-end is required for efficient 3'-end histone mRNA exonuclease activity and degradation of RNA substrates. Also able to degrade the 3'-overhangs of short interfering RNAs (siRNAs) in vitro, suggesting a possible role as regulator of RNA interference (RNAi). Required for binding the 5'-ACCCA-3' sequence present in stem-loop structure. Able to bind other mRNAs. Required for 5.8S rRNA 3'-end processing. Also binds to 5.8s ribosomal RNA. Binds with high affinity to the stem-loop structure of replication-dependent histone pre-mRNAs. In vitro, does not have sequence specificity. In vitro, has weak DNA exonuclease activity. In vitro, shows biphasic kinetics such that there is rapid hydrolysis of the last three unpaired RNA nucleotides in the 39 flanking sequence followed by a much slower cleavage through the stem that occurs over a longer incubation period in the order of hours. ERI1-mediated RNA metabolism plays a key role in chondrogenesis. The sequence is that of 3'-5' exoribonuclease 1 (Eri1) from Rattus norvegicus (Rat).